A 522-amino-acid polypeptide reads, in one-letter code: BTB/POZ domain-containing protein 3 (522 aa).

Residues 120 to 190 enclose the BTB domain; sequence ADVHFVVGPP…IYCDEIDLAA (71 aa). The BACK domain occupies 235–300; it reads FEEPDLTQRC…NWAEVECQRQ (66 aa).

Strongly expressed in the primary visual cortex.

Its subcellular location is the cytoplasm. The protein localises to the cytosol. The protein resides in the nucleus. Functionally, acts as a key regulator of dendritic field orientation during development of sensory cortex. Also directs dendrites toward active axon terminals when ectopically expressed. This chain is BTB/POZ domain-containing protein 3 (BTBD3), found in Callithrix jacchus (White-tufted-ear marmoset).